We begin with the raw amino-acid sequence, 211 residues long: MAKTHEIKAERRADEGKGASRRLRHAGVIPAIVYGGELEPVSIQLNHEQIWLAQQNEWFYSSILDLNLNGDVQQVLLRDIQRHPFKQLIMHIDFQRVSANQKLSAAVPLHFINEEASPAGKSSEVVVTHELNEVQVVCLPKDLPEFIEVDLGALEVGNVIHLSEIKLPAGVEIPELKLGKERDVAVVAAKHVRIQEEDAAGEEGSEGAETK.

The segment covering 1-18 has biased composition (basic and acidic residues); that stretch reads MAKTHEIKAERRADEGKG. Residues 1 to 20 form a disordered region; the sequence is MAKTHEIKAERRADEGKGAS.

This sequence belongs to the bacterial ribosomal protein bL25 family. CTC subfamily. As to quaternary structure, part of the 50S ribosomal subunit; part of the 5S rRNA/L5/L18/L25 subcomplex. Contacts the 5S rRNA. Binds to the 5S rRNA independently of L5 and L18.

Its function is as follows. This is one of the proteins that binds to the 5S RNA in the ribosome where it forms part of the central protuberance. The protein is Large ribosomal subunit protein bL25 of Xanthomonas oryzae pv. oryzae (strain MAFF 311018).